The sequence spans 122 residues: Large ribosomal subunit protein uL18 (122 aa).

This sequence belongs to the universal ribosomal protein uL18 family. In terms of assembly, part of the 50S ribosomal subunit; part of the 5S rRNA/L5/L18/L25 subcomplex. Contacts the 5S and 23S rRNAs.

In terms of biological role, this is one of the proteins that bind and probably mediate the attachment of the 5S RNA into the large ribosomal subunit, where it forms part of the central protuberance. The chain is Large ribosomal subunit protein uL18 from Mycobacterium avium (strain 104).